A 117-amino-acid chain; its full sequence is Large ribosomal subunit protein bL20 (117 aa).

This sequence belongs to the bacterial ribosomal protein bL20 family.

Its function is as follows. Binds directly to 23S ribosomal RNA and is necessary for the in vitro assembly process of the 50S ribosomal subunit. It is not involved in the protein synthesizing functions of that subunit. This Nitratidesulfovibrio vulgaris (strain DSM 19637 / Miyazaki F) (Desulfovibrio vulgaris) protein is Large ribosomal subunit protein bL20.